The primary structure comprises 277 residues: Photosystem I assembly factor PSA3, chloroplastic (277 aa).

Residues 1-45 constitute a chloroplast transit peptide; it reads MVVVTHISTSFHQISPSFFHLRLRNPSTTSSSRPKLDGGFALSIR.

Interacts with PYG7.

The protein resides in the plastid. It is found in the chloroplast. Its subcellular location is the chloroplast thylakoid membrane. Nuclear genome-encoded factor required for the accumulation of photosystem I (PSI). Functions as a PSI biogenesis factor. Cooperates with PYG7 to promote the stable assembly of PSI in the thylakoid membrane. May target primarily the PsaC subunit. Does not seem to be required for the expression of chloroplast genes encoding PSI subunits. The sequence is that of Photosystem I assembly factor PSA3, chloroplastic from Arabidopsis thaliana (Mouse-ear cress).